Here is a 937-residue protein sequence, read N- to C-terminus: Protocadherin alpha-7 (937 aa).

The signal sequence occupies residues Met1–Gly29. Over Gln30 to Asn697 the chain is Extracellular. 6 Cadherin domains span residues Ser34–Phe133, Ala157–Phe242, Asp243–Leu350, Thr351–Phe455, Ala456–Leu565, and Pro587–Val682. A disulfide bridge connects residues Cys96 and Cys102. O-linked (Man) threonine glycosylation is found at Thr223 and Thr225. N-linked (GlcNAc...) asparagine glycosylation is found at Asn257 and Asn265. A glycan (O-linked (Man) threonine) is linked at Thr438. O-linked (Man) serine glycosylation occurs at Ser478. An N-linked (GlcNAc...) asparagine glycan is attached at Asn548. A helical transmembrane segment spans residues Val698 to Tyr718. Over Thr719–Gln937 the chain is Cytoplasmic. Disordered regions lie at residues Arg755–Arg794 and Arg816–Pro843. 5 PXXP repeats span residues Pro774–Pro777, Pro786–Pro789, Pro819–Pro822, Pro860–Pro863, and Pro878–Pro881. The interval Pro774–Pro881 is 5 X 4 AA repeats of P-X-X-P. The span at Ser775–Arg787 shows a compositional bias: polar residues. The disordered stretch occupies residues Arg887 to Gln937. Basic and acidic residues predominate over residues Asp896 to Lys910.

Forms homodimers in trans (molecules expressed by two different cells). Forms promiscuous heterodimers in cis (at the plasma membrane of the same cell) with other protocadherins.

It localises to the cell membrane. Functionally, calcium-dependent cell-adhesion protein involved in cells self-recognition and non-self discrimination. Thereby, it is involved in the establishment and maintenance of specific neuronal connections in the brain. This Mus musculus (Mouse) protein is Protocadherin alpha-7.